Here is a 677-residue protein sequence, read N- to C-terminus: Secretogranin-1 (677 aa).

The N-terminal stretch at 1–20 (MQPTLLLSLLGAVGLAAVNS) is a signal peptide. Residues cysteine 36 and cysteine 57 are joined by a disulfide bond. 2 stretches are compositionally biased toward basic and acidic residues: residues 64-100 (SRKD…ESSS) and 118-136 (ADTE…RADE). The segment at 64–463 (SRKDVKDKET…DKARRHPQGA (400 aa)) is disordered. Threonine 79 bears the Phosphothreonine mark. Phosphoserine is present on residues serine 93, serine 99, and serine 100. Residue serine 93 is glycosylated (O-linked (Xyl...) (chondroitin sulfate) serine). The tract at residues 116–120 (TKADT) is O-glycosylated at one site. The residue at position 130 (serine 130) is a Phosphoserine; by FAM20C. Serine 149 is subject to Phosphoserine. 3 stretches are compositionally biased toward basic and acidic residues: residues 150-162 (EEVK…KSQR), 172-190 (NYQK…HLEE), and 200-236 (NERK…EKSS). Serine 183 carries the phosphoserine modification. Serine 225 bears the Phosphoserine; by FAM20C mark. The O-linked (Xyl...) (chondroitin sulfate) serine glycan is linked to serine 239. 2 positions are modified to phosphoserine: serine 259 and serine 263. Residues 262–272 (ESEEGEEDATS) are compositionally biased toward acidic residues. A compositionally biased stretch (basic residues) spans 277 to 287 (RRTRPRHHHGR). 4 positions are modified to phosphoserine: serine 293, serine 294, serine 311, and serine 335. Tyrosine 341 carries the post-translational modification Sulfotyrosine. Residues 359–372 (WERYRGRGSEEYRA) are compositionally biased toward basic and acidic residues. A phosphoserine; by FAM20C mark is found at serine 367, serine 377, and serine 380. Basic and acidic residues-rich tracts occupy residues 384–415 (EDKR…EPGK) and 433–455 (DTRE…QMDK). Phosphotyrosine is present on tyrosine 401. Serine 405 is subject to Phosphoserine. Position 474 is a sulfotyrosine (tyrosine 474). A disordered region spans residues 475 to 512 (GEEGAPGKWQQQGDLQDTKENREEARFQDKQYSSHHTA). Over residues 490–503 (QDTKENREEARFQD) the composition is skewed to basic and acidic residues. Residues serine 533 and serine 534 each carry the phosphoserine modification. Position 566 is a sulfotyrosine (tyrosine 566). Position 617 is a phosphoserine (serine 617). The disordered stretch occupies residues 622 to 653 (DFYDSEEPVSTHQEAENEKDRADQTVLTEDEK). Residue tyrosine 624 is modified to Sulfotyrosine. 2 positions are modified to phosphoserine: serine 626 and serine 631. Residues 634-653 (QEAENEKDRADQTVLTEDEK) are compositionally biased toward basic and acidic residues.

Belongs to the chromogranin/secretogranin protein family. Interacts with ITPR1 in the secretory granules. In terms of processing, extensively processed by limited proteolysis at conserved basic residues. Alternative processing are seen in different tissues. Post-translationally, O-glycosylated. Detected in cerebrospinal fluid and urine (at protein level). Expressed in the adrenal medulla, and in pheochromocytoma. Not expressed in liver.

The protein localises to the secreted. Its function is as follows. Secretogranin-1 is a neuroendocrine secretory granule protein, which may be the precursor for other biologically active peptides. The chain is Secretogranin-1 (CHGB) from Homo sapiens (Human).